A 368-amino-acid chain; its full sequence is C-X-C chemokine receptor type 3 (368 aa).

Residues 1-53 lie on the Extracellular side of the membrane; it reads MVLEVSDHQVLNDAEVAALLENFSSSYDYGENESDSCCTSPPCPQDFSLNFDR. An N-linked (GlcNAc...) asparagine glycan is attached at Asn22. Sulfotyrosine occurs at positions 27 and 29. An N-linked (GlcNAc...) asparagine glycan is attached at Asn32. Residues 54–80 traverse the membrane as a helical segment; that stretch reads AFLPALYSLLFLLGLLGNGAVAAVLLS. Topologically, residues 81–89 are cytoplasmic; that stretch reads RRTALSSTD. A helical transmembrane segment spans residues 90–110; that stretch reads TFLLHLAVADTLLVLTLPLWA. Residues 111–125 lie on the Extracellular side of the membrane; that stretch reads VDAAVQWVFGSGLCK. Residues Cys124 and Cys203 are joined by a disulfide bond. Residues 126 to 147 traverse the membrane as a helical segment; that stretch reads VAGALFNINFYAGALLLACISF. Topologically, residues 148–169 are cytoplasmic; it reads DRYLNIVHATQLYRRGPPARVT. A helical transmembrane segment spans residues 170-189; the sequence is LTCLAVWGLCLLFALPDFIF. The Extracellular segment spans residues 190-212; that stretch reads LSAHHDERLNATHCQYNFPQVGR. A helical membrane pass occupies residues 213–233; the sequence is TALRVLQLVAGFLLPLLVMAY. Residues 234–255 are Cytoplasmic-facing; the sequence is CYAHILAVLLVSRGQRRLRAMR. Residues 256–277 traverse the membrane as a helical segment; the sequence is LVVVVVVAFALCWTPYHLVVLV. Residues 278 to 298 are Extracellular-facing; it reads DILMDLGALARNCGRESRVDV. A helical membrane pass occupies residues 299–321; that stretch reads AKSVTSGLGYMHCCLNPLLYAFV. The Cytoplasmic segment spans residues 322-368; the sequence is GVKFRERMWMLLLRLGCPNQRGLQRQPSSSRRDSSWSETSEASYSGL. Residues 342 to 368 form a disordered region; the sequence is RGLQRQPSSSRRDSSWSETSEASYSGL. A compositionally biased stretch (low complexity) spans 357-368; it reads WSETSEASYSGL.

It belongs to the G-protein coupled receptor 1 family. As to quaternary structure, homomer. Forms heteromers with ACKR4. In terms of assembly, interacts with PF4/CXCL4. In terms of processing, sulfation on Tyr-27 and Tyr-29 is essential for CXCL10 binding and subsequent signal transduction induction. N-glycosylated. Isoform 1 and isoform 2 are mainly expressed in heart, kidney, liver and skeletal muscle. Isoform 1 is also expressed in placenta. Isoform 2 is expressed in endothelial cells. Expressed in T-cells (at protein level).

The protein resides in the cell membrane. In terms of biological role, receptor for the C-X-C chemokine CXCL9, CXCL10 and CXCL11 and mediates the proliferation, survival and angiogenic activity of human mesangial cells (HMC) through a heterotrimeric G-protein signaling pathway. Binds to CCL21. Probably promotes cell chemotaxis response. Upon activation by PF4, induces activated T-lymphocytes migration mediated via downstream Ras/extracellular signal-regulated kinase (ERK) signaling. Functionally, receptor for the C-X-C chemokine CXCL4 and also mediates the inhibitory activities of CXCL9, CXCL10 and CXCL11 on the proliferation, survival and angiogenic activity of human microvascular endothelial cells (HMVEC) through a cAMP-mediated signaling pathway. Does not promote cell chemotaxis respons. Interaction with CXCL4 or CXCL10 leads to activation of the p38MAPK pathway and contributes to inhibition of angiogenesis. Overexpression in renal cancer cells down-regulates expression of the anti-apoptotic protein HMOX1 and promotes apoptosis. Mediates the activity of CXCL11. This chain is C-X-C chemokine receptor type 3 (CXCR3), found in Homo sapiens (Human).